We begin with the raw amino-acid sequence, 576 residues long: Arginine--tRNA ligase (576 aa).

The 'HIGH' region signature appears at proline 122–histidine 132.

This sequence belongs to the class-I aminoacyl-tRNA synthetase family. As to quaternary structure, monomer.

The protein localises to the cytoplasm. It carries out the reaction tRNA(Arg) + L-arginine + ATP = L-arginyl-tRNA(Arg) + AMP + diphosphate. This chain is Arginine--tRNA ligase, found in Yersinia pseudotuberculosis serotype O:1b (strain IP 31758).